Consider the following 459-residue polypeptide: Trigger factor (459 aa).

The PPIase FKBP-type domain maps to 166-245 (GDFANIDLTA…VNSVKAEELP (80 aa)).

Belongs to the FKBP-type PPIase family. Tig subfamily.

It localises to the cytoplasm. It catalyses the reaction [protein]-peptidylproline (omega=180) = [protein]-peptidylproline (omega=0). In terms of biological role, involved in protein export. Acts as a chaperone by maintaining the newly synthesized protein in an open conformation. Functions as a peptidyl-prolyl cis-trans isomerase. The protein is Trigger factor of Bifidobacterium longum subsp. infantis (strain ATCC 15697 / DSM 20088 / JCM 1222 / NCTC 11817 / S12).